A 301-amino-acid polypeptide reads, in one-letter code: Probable alpha-L-glutamate ligase (301 aa).

The ATP-grasp domain occupies 104–287 (LQLLSRRGIG…VAGMIIEHLE (184 aa)). ATP-binding positions include lysine 141, 178–179 (EY), aspartate 187, and 211–213 (RSN). Mg(2+)-binding residues include aspartate 248, glutamate 260, and asparagine 262. Mn(2+)-binding residues include aspartate 248, glutamate 260, and asparagine 262.

Belongs to the RimK family. Mg(2+) serves as cofactor. Requires Mn(2+) as cofactor.

This chain is Probable alpha-L-glutamate ligase, found in Pseudomonas putida (strain GB-1).